The sequence spans 119 residues: Large ribosomal subunit protein uL18 (119 aa).

This sequence belongs to the universal ribosomal protein uL18 family. As to quaternary structure, part of the 50S ribosomal subunit; part of the 5S rRNA/L5/L18/L25 subcomplex. Contacts the 5S and 23S rRNAs.

In terms of biological role, this is one of the proteins that bind and probably mediate the attachment of the 5S RNA into the large ribosomal subunit, where it forms part of the central protuberance. The sequence is that of Large ribosomal subunit protein uL18 from Xanthomonas oryzae pv. oryzae (strain MAFF 311018).